The primary structure comprises 594 residues: MASGGGDDGLRRRGCSCTKDDFLPEESFQSMGNYLKALKETPSRFMDRIMTRSLDSDEINEMKARSGHEMKKTLTWWDLMWFGIGAVIGSGIFVLTGLEARNHSGPAVVLSYVVSGVSAMLSVFCYTEFAVEIPVAGGSFAYLRVELGDFMAFIAAGNIILEYVVGGAAVARSWTSYFATLLNHKPEDFRIIVHKLGEDYSHLDPIAVGVCAIICVLAVVGTKGSSRFNYIASIIHMVVILFVIIAGFTKADVKNYSDFTPYGVRGVFKSAAVLFFAYIGFDAVSTMAEETKNPGRDIPIGLVGSMVVTTVCYCLMAVTLCLMQPYQQIDPDAPFSVAFSAVGWDWAKYIVAFGALKGMTTVLLVGAIGQARYMTHIARAHMMPPWLAQVNAKTGTPINATVVMLAATALIAFFTKLKILADLLSVSTLFIFMFVAVALLVRRYYVTGETSTRDRNKFLVFLGLILASSTATAVYWALEEEGWIGYCITVPIWFLSTVAMKFLVPQARAPKIWGVPLVPWLPSASIAINIFLLGSIDTKSFVRFAIWTGILLIYYVLFGLHATYDTAKATLKEKQALQKAEEGGVVADNSCSAT.

The residue at position 2 (Ala2) is an N-acetylalanine. Over 2–78 (ASGGGDDGLR…EMKKTLTWWD (77 aa)) the chain is Cytoplasmic. The helical transmembrane segment at 79-99 (LMWFGIGAVIGSGIFVLTGLE) threads the bilayer. The Extracellular portion of the chain corresponds to 100 to 104 (ARNHS). Asn102 is a glycosylation site (N-linked (GlcNAc...) asparagine). The helical transmembrane segment at 105-125 (GPAVVLSYVVSGVSAMLSVFC) threads the bilayer. Topologically, residues 126 to 149 (YTEFAVEIPVAGGSFAYLRVELGD) are cytoplasmic. The helical transmembrane segment at 150–170 (FMAFIAAGNIILEYVVGGAAV) threads the bilayer. Residues 171-201 (ARSWTSYFATLLNHKPEDFRIIVHKLGEDYS) lie on the Extracellular side of the membrane. The helical transmembrane segment at 202–222 (HLDPIAVGVCAIICVLAVVGT) threads the bilayer. Residues 223–227 (KGSSR) lie on the Cytoplasmic side of the membrane. The helical transmembrane segment at 228 to 248 (FNYIASIIHMVVILFVIIAGF) threads the bilayer. The Extracellular portion of the chain corresponds to 249-266 (TKADVKNYSDFTPYGVRG). N-linked (GlcNAc...) asparagine glycosylation occurs at Asn255. A helical membrane pass occupies residues 267-287 (VFKSAAVLFFAYIGFDAVSTM). The Cytoplasmic segment spans residues 288–297 (AEETKNPGRD). A helical membrane pass occupies residues 298–318 (IPIGLVGSMVVTTVCYCLMAV). Over 319–348 (TLCLMQPYQQIDPDAPFSVAFSAVGWDWAK) the chain is Extracellular. Residues 349–369 (YIVAFGALKGMTTVLLVGAIG) form a helical membrane-spanning segment. Over 370–393 (QARYMTHIARAHMMPPWLAQVNAK) the chain is Cytoplasmic. The helical transmembrane segment at 394–414 (TGTPINATVVMLAATALIAFF) threads the bilayer. At 415–418 (TKLK) the chain is on the extracellular side. Residues 419 to 439 (ILADLLSVSTLFIFMFVAVAL) traverse the membrane as a helical segment. Residues 440–457 (LVRRYYVTGETSTRDRNK) lie on the Cytoplasmic side of the membrane. The helical transmembrane segment at 458 to 478 (FLVFLGLILASSTATAVYWAL) threads the bilayer. Topologically, residues 479 to 483 (EEEGW) are extracellular. The helical transmembrane segment at 484–504 (IGYCITVPIWFLSTVAMKFLV) threads the bilayer. Residues 505–511 (PQARAPK) are Cytoplasmic-facing. A helical membrane pass occupies residues 512 to 532 (IWGVPLVPWLPSASIAINIFL). The Extracellular portion of the chain corresponds to 533–543 (LGSIDTKSFVR). The helical transmembrane segment at 544 to 564 (FAIWTGILLIYYVLFGLHATY) threads the bilayer. At 565–594 (DTAKATLKEKQALQKAEEGGVVADNSCSAT) the chain is on the cytoplasmic side.

Belongs to the amino acid-polyamine-organocation (APC) superfamily. Cationic amino acid transporter (CAT) (TC 2.A.3.3) family. In terms of tissue distribution, expressed in roots, stems, flowers, petioles, seeds, siliques, and leaves. Mostly present in major veins.

The protein localises to the membrane. Its activity is regulated as follows. Inhibited by the protonophore 2,4-dinitrophenol. Functionally, high-affinity permease involved in the transport of the cationic amino acids (e.g. arginine, lysine, histidine, citrulline, valine, and glutamate). Transport mostly basic amino acids, and, to a lower extent neutral and acidic amino acids. May function as a proton symporter. The sequence is that of Cationic amino acid transporter 1 (CAT1) from Arabidopsis thaliana (Mouse-ear cress).